The sequence spans 257 residues: MKAVILAGGLGTRLSEETIVKPKPMVEIGGKPILWHIMKMYSVHGIKDFIICCGYKGYVIKEYFANYFLHMSDVTFHMAENRMEVHHKRVEPWNVTLVDTGDSSMTGGRLKRVAEYVKDDEAFLFTYGDGVADLDIKATIDFHKAHGKKATLTATFPPGRFGALDIQAGQVRSFQEKPKGDGAMINGGFFVLNPSVIDLIDNDATTWEQEPLMTLAQQGELMAFEHPGFWQPMDTLRDKVYLEGLWEKGKAPWKTWE.

Substrate is bound by residues 6-10 (LAGGL), 11-13 (GTR), Lys23, Ser104, Arg109, and Gly128. Residues Asp129 and Asp234 each contribute to the Mg(2+) site.

It belongs to the glucose-1-phosphate cytidylyltransferase family. Homohexamer. It depends on Mg(2+) as a cofactor.

The enzyme catalyses alpha-D-glucose 1-phosphate + CTP + H(+) = CDP-D-glucose + diphosphate. It functions in the pathway nucleotide-sugar biosynthesis; CDP-3,6-dideoxy-D-mannose biosynthesis; CDP-3,6-dideoxy-D-mannose from CTP and alpha-D-glucose 1-phosphate: step 1/5. It participates in bacterial outer membrane biogenesis; LPS O-antigen biosynthesis. Involved in the biosynthesis of the tyvelose, a 3,6-dideoxyhexose found in the O-antigen of the surface lipopolysaccharides. It catalyzes the transfer of a CMP moiety from CTP to glucose 1-phosphate. This enzyme can utilize either CTP or UTP as the nucleotide donor. The chain is Glucose-1-phosphate cytidylyltransferase (rfbF) from Salmonella typhi.